A 307-amino-acid polypeptide reads, in one-letter code: NmrA-like family domain-containing oxidoreductase flvB (307 aa).

Residues 4–9 (LITGAT), 32–36 (SSSSP), 53–54 (DY), 74–76 (STN), and 148–151 (YVEG) contribute to the NADP(+) site.

It belongs to the NmrA-type oxidoreductase family.

The catalysed reaction is (2S)-5,5-dimethyl-2,3,4,5-tetrahydropyridine-2,6-dicarboxylate + NADPH + 2 H(+) = (6S)-3,3-dimethylpiperidine-2,6-dicarboxylate + NADP(+). The enzyme catalyses (2S)-5,5-dimethyl-2,3,4,5-tetrahydropyridine-2,6-dicarboxylate + NADH + 2 H(+) = (6S)-3,3-dimethylpiperidine-2,6-dicarboxylate + NAD(+). Its pathway is secondary metabolite biosynthesis; terpenoid biosynthesis. NmrA-like family domain-containing oxidoreductase; part of the gene cluster that mediates the biosynthesis of flavunoidine, an alkaloidal terpenoid with a tetracyclic cage-like core connected to dimethylcadaverine via a C-N bond and acylated with 5,5-dimethyl-L-pipecolate. The tetracyclic core is synthesized by the terpene cyclase flvE and the cytochrome P450 monooxygenase flvD. The terpene cyclase flvE catalyzes the cyclization of farnesyl pyrophosphate (FPP) to form (1R,4R,5S)-(+)-acoradiene and the cytochrome P450 monooxygenase flvD is then responsible for oxidative conversion of (1R,4R,5S)-(+)-acoradiene into the tetracyclic cage present in the final product flavunoidine. In parallel, the N-methyltransferase flvH dimethylates L-lysine to give N,N-dimethyl-L-Lysin which is decarboxylated by flvG to afford dimethylcadaverine. The terpene cyclase-like protein flvF is the enzyme that attaches the dimethylcadaverine precusor at the C-7 of the tetracyclic cage to yield pre-flavunoidine. The cytochrome monooxygenase flvC hydroxylates the C-10 position of pre-flavunoidine whereas the NRPS flvI acylates the terpenoid core at the hydroxylated C-10 with dimethylpipecolate to yield final flavunoidine. The bifunctional enzyme flvA and the dehydrogenase flvB are responsible for the synthesis of the dimethylpipecolate precursor. The PLP-dependent lyase domain of flvA might use L-O-acetyl-homoserine and alpha-keto-isovalerate to form an intermediary ketone that can cyclize intramolecularly to yield an imine. The imine can be reduced by flvB to yield the 6-carboxylated pipecolate. The C-terminal alpha-KG-dependent oxygenase domain of flvA is then proposed to catalyze the decarboxylation to yield dimethylpipecolate. The chain is NmrA-like family domain-containing oxidoreductase flvB from Aspergillus flavus (strain ATCC 200026 / FGSC A1120 / IAM 13836 / NRRL 3357 / JCM 12722 / SRRC 167).